The following is a 211-amino-acid chain: Arginine exporter protein ArgO (211 aa).

The next 6 helical transmembrane spans lie at 1–21 (MISYYFQGFALGAAMILPLGP), 37–57 (LMIALLCALSDLVLISAGIFG), 68–88 (LLALVTWGGVAFLLWYGFGAL), 111–131 (IIATMLAVTWLNPHVYLDTFV), 147–167 (WFALGTISASFLWFFGLALLA), and 179–199 (AQRIINILVGVVMWLIAFQLA).

The protein belongs to the LysE/ArgO transporter (TC 2.A.75) family.

It is found in the cell inner membrane. It catalyses the reaction L-arginine(in) = L-arginine(out). Its function is as follows. Involved in the export of arginine. Important to control the intracellular level of arginine and the correct balance between arginine and lysine. This is Arginine exporter protein ArgO from Salmonella choleraesuis (strain SC-B67).